The chain runs to 245 residues: Orotidine 5'-phosphate decarboxylase (245 aa).

Substrate contacts are provided by residues Asp-22, Lys-44, 71–80, Thr-131, Arg-192, Gln-201, Gly-221, and Arg-222; that span reads DLKFHDIPNT. Lys-73 (proton donor) is an active-site residue.

Belongs to the OMP decarboxylase family. Type 1 subfamily. As to quaternary structure, homodimer.

It catalyses the reaction orotidine 5'-phosphate + H(+) = UMP + CO2. Its pathway is pyrimidine metabolism; UMP biosynthesis via de novo pathway; UMP from orotate: step 2/2. Its function is as follows. Catalyzes the decarboxylation of orotidine 5'-monophosphate (OMP) to uridine 5'-monophosphate (UMP). The polypeptide is Orotidine 5'-phosphate decarboxylase (Shigella dysenteriae serotype 1 (strain Sd197)).